A 148-amino-acid polypeptide reads, in one-letter code: [Ribosomal protein bS18]-alanine N-acetyltransferase (148 aa).

Residues 2-147 (NTISSLETTD…DAIIMALPIS (146 aa)) enclose the N-acetyltransferase domain. 69 to 71 (IAV) contributes to the acetyl-CoA binding site. Catalysis depends on Glu103, which acts as the Proton acceptor. Acetyl-CoA is bound at residue Asn108. Tyr115 (proton donor) is an active-site residue.

Belongs to the acetyltransferase family. RimI subfamily.

The protein resides in the cytoplasm. The enzyme catalyses N-terminal L-alanyl-[ribosomal protein bS18] + acetyl-CoA = N-terminal N(alpha)-acetyl-L-alanyl-[ribosomal protein bS18] + CoA + H(+). Functionally, acetylates the N-terminal alanine of ribosomal protein bS18. In Escherichia coli O157:H7, this protein is [Ribosomal protein bS18]-alanine N-acetyltransferase.